A 384-amino-acid chain; its full sequence is Centrosomal protein of 44 kDa (384 aa).

Positions 11–188 (RKLEQRLRTL…TKCYSSALVE (178 aa)) are binds with microtubules and centrioles. The tract at residues 191-222 (EEEEPTSDSEGGSHLEHEMESPFETAETTPNS) is disordered. Residues 201 to 210 (GGSHLEHEME) are compositionally biased toward basic and acidic residues. Coiled coils occupy residues 221–260 (NSEQ…KGKI) and 353–378 (TEDS…SKLL).

Binds to centriolar microtubules.

The protein localises to the cytoplasm. It is found in the cytoskeleton. The protein resides in the microtubule organizing center. Its subcellular location is the centrosome. It localises to the centriole. The protein localises to the spindle pole. It is found in the midbody. Centriole-enriched microtubule-binding protein involved in centriole biogenesis. In collaboration with CEP295 and POC1B, is required for the centriole-to-centrosome conversion by ensuring the formation of bona fide centriole wall. Functions as a linker component that maintains centrosome cohesion. Associates with CROCC and regulates its stability and localization to the centrosome. This chain is Centrosomal protein of 44 kDa (cep44), found in Xenopus laevis (African clawed frog).